Consider the following 420-residue polypeptide: MKTLIARHKAGEHIGICSVCSAHPLVIEAALAFDRNSTRKVLIEATSNQVNQFGGYTGMTPADFREFVFTIADKVGFARERIILGGDHLGPNCWQQENADAAMEKSVELVKAYVRAGFSKIHLDASMSCAGDTIPLAPETVAERAAVLCFAAESVATDCQREQLSYVIGTEVPVPGGEASAIQSVHITHVEDAANTLRTHQKAFIARGLTEALTRVIAIVVQPGVEFDHSNIIHYQPQEAQALAQWIENTRMVYEAHSTDYQTRTAYWELVRDHFAILKVGPALTFALREAIFALAQIEQELIAPENRSGCLAVIEEVMLDEPQYWKKYYRTGFNDSLLDIRYSLSDRIRYYWPHSRIKNSVETMMVNLQGVDIPLGMISQYLPKQFERIQSGELSAMPHQLIMNKIYDVLRAYRYGCAE.

It belongs to the GatZ/KbaZ family. GatZ subfamily. As to quaternary structure, forms a complex with GatY.

Its pathway is carbohydrate metabolism; D-tagatose 6-phosphate degradation; D-glyceraldehyde 3-phosphate and glycerone phosphate from D-tagatose 6-phosphate: step 2/2. In terms of biological role, component of the tagatose-1,6-bisphosphate aldolase GatYZ that is required for full activity and stability of the Y subunit. Could have a chaperone-like function for the proper and stable folding of GatY. When expressed alone, GatZ does not show any aldolase activity. Is involved in the catabolism of galactitol. The chain is D-tagatose-1,6-bisphosphate aldolase subunit GatZ from Shigella flexneri serotype 5b (strain 8401).